The sequence spans 698 residues: SPX domain-containing membrane protein OsI_21475 (698 aa).

Residues 2–145 (VNFGKKLMAD…GYRFTDYYVT (144 aa)) enclose the SPX domain. The next 6 helical transmembrane spans lie at 248-268 (FMSLMLNLVNTFLYMVNTYII), 279-299 (LGAASTVCGVVIGSMAVAQIF), 316-336 (LIFSSIVLFLGNVCYAMAYDM), 339-357 (LTVLIIGRLLCGMGSARAV), 376-396 (AGFVSASALGMACGPALAGLL), and 412-432 (LPGWVMAVAWLLYLVWLWISF). Residues 467–495 (LLRDSSKKDEDDDEEVDDSEEGTHDSRKP) are disordered. The span at 476–486 (EDDDEEVDDSE) shows a compositional bias: acidic residues. Transmembrane regions (helical) follow at residues 514–534 (LLIYFMLKYAMEILLSESSVI), 545–565 (AVAIFLAILGLTVLPVNAVVG), 577–597 (LLMVSQITLLVGIIFSFKITS), 605–625 (VVSALVTFVSAEVLEGVNLSL), and 671–691 (LLNVTLLPSLVICAASIASTF).

This sequence belongs to the major facilitator superfamily.

Its subcellular location is the membrane. The protein is SPX domain-containing membrane protein OsI_21475 of Oryza sativa subsp. indica (Rice).